The chain runs to 468 residues: Sushi repeat-containing protein SRPX2 (468 aa).

The first 25 residues, 1-25 (MMTSPLTQRGALSLLLLLMPAVTPT), serve as a signal peptide directing secretion. 3 Sushi domains span residues 72–122 (ATCY…YCRQ), 123–181 (IRCH…VCVD), and 265–324 (RRCP…VCTP). 4 cysteine pairs are disulfide-bonded: Cys-74/Cys-108, Cys-94/Cys-120, Cys-125/Cys-166, and Cys-152/Cys-179. The 85-residue stretch at 180–264 (VDIDPPKIRC…SCKFIVKVQV (85 aa)) folds into the HYR domain. 2 disulfides stabilise this stretch: Cys-267-Cys-309 and Cys-295-Cys-322.

In terms of assembly, forms homooligomers. Interacts with PLAUR (via the UPAR/Ly6 domains), ADAMTS4 and CTSB. Interacts with HGF; the interaction increases the mitogenic activity of HGF. Post-translationally, contains chondroitin sulfate chains. In terms of tissue distribution, expressed in angiogenic endothelial cells (at protein level).

Its subcellular location is the secreted. The protein resides in the cytoplasm. It is found in the cell surface. It localises to the synapse. Acts as a ligand for the urokinase plasminogen activator surface receptor. Plays a role in angiogenesis by inducing endothelial cell migration and the formation of vascular network (cords). Involved in cellular migration and adhesion. Increases the phosphorylation levels of FAK. Interacts with and increases the mitogenic activity of HGF. Promotes synapse formation. Required for ultrasonic vocalizations. The sequence is that of Sushi repeat-containing protein SRPX2 (Srpx2) from Mus musculus (Mouse).